A 582-amino-acid polypeptide reads, in one-letter code: Proline--tRNA ligase (582 aa).

This sequence belongs to the class-II aminoacyl-tRNA synthetase family. ProS type 1 subfamily. Homodimer.

It localises to the cytoplasm. It catalyses the reaction tRNA(Pro) + L-proline + ATP = L-prolyl-tRNA(Pro) + AMP + diphosphate. In terms of biological role, catalyzes the attachment of proline to tRNA(Pro) in a two-step reaction: proline is first activated by ATP to form Pro-AMP and then transferred to the acceptor end of tRNA(Pro). As ProRS can inadvertently accommodate and process non-cognate amino acids such as alanine and cysteine, to avoid such errors it has two additional distinct editing activities against alanine. One activity is designated as 'pretransfer' editing and involves the tRNA(Pro)-independent hydrolysis of activated Ala-AMP. The other activity is designated 'posttransfer' editing and involves deacylation of mischarged Ala-tRNA(Pro). The misacylated Cys-tRNA(Pro) is not edited by ProRS. The protein is Proline--tRNA ligase of Mycobacterium bovis (strain ATCC BAA-935 / AF2122/97).